A 157-amino-acid polypeptide reads, in one-letter code: Small ribosomal subunit protein uS7 (157 aa).

Belongs to the universal ribosomal protein uS7 family. As to quaternary structure, part of the 30S ribosomal subunit. Contacts proteins S9 and S11.

Functionally, one of the primary rRNA binding proteins, it binds directly to 16S rRNA where it nucleates assembly of the head domain of the 30S subunit. Is located at the subunit interface close to the decoding center, probably blocks exit of the E-site tRNA. The protein is Small ribosomal subunit protein uS7 of Protochlamydia amoebophila (strain UWE25).